Consider the following 419-residue polypeptide: UDP-N-acetylglucosamine 1-carboxyvinyltransferase (419 aa).

22 to 23 (KN) serves as a coordination point for phosphoenolpyruvate. Arginine 91 is a binding site for UDP-N-acetyl-alpha-D-glucosamine. Cysteine 115 functions as the Proton donor in the catalytic mechanism. Cysteine 115 carries the 2-(S-cysteinyl)pyruvic acid O-phosphothioketal modification. Residues 120-124 (RPVDL), 160-163 (KVSV), aspartate 305, and valine 327 each bind UDP-N-acetyl-alpha-D-glucosamine.

Belongs to the EPSP synthase family. MurA subfamily.

The protein localises to the cytoplasm. The catalysed reaction is phosphoenolpyruvate + UDP-N-acetyl-alpha-D-glucosamine = UDP-N-acetyl-3-O-(1-carboxyvinyl)-alpha-D-glucosamine + phosphate. Its pathway is cell wall biogenesis; peptidoglycan biosynthesis. Its function is as follows. Cell wall formation. Adds enolpyruvyl to UDP-N-acetylglucosamine. The polypeptide is UDP-N-acetylglucosamine 1-carboxyvinyltransferase (Shigella dysenteriae serotype 1 (strain Sd197)).